We begin with the raw amino-acid sequence, 382 residues long: Succinate--CoA ligase [ADP-forming] subunit beta (382 aa).

Residues 9–240 enclose the ATP-grasp domain; that stretch reads KELLKKYGLP…ITQIDPLEVE (232 aa). Positions 46, 98, 101, and 106 each coordinate ATP. Mg(2+)-binding residues include N195 and D209. Substrate contacts are provided by residues N260 and 317 to 319; that span reads GIL.

It belongs to the succinate/malate CoA ligase beta subunit family. As to quaternary structure, heterotetramer of two alpha and two beta subunits. Requires Mg(2+) as cofactor.

It catalyses the reaction succinate + ATP + CoA = succinyl-CoA + ADP + phosphate. The catalysed reaction is GTP + succinate + CoA = succinyl-CoA + GDP + phosphate. Its pathway is carbohydrate metabolism; tricarboxylic acid cycle; succinate from succinyl-CoA (ligase route): step 1/1. Functionally, succinyl-CoA synthetase functions in the citric acid cycle (TCA), coupling the hydrolysis of succinyl-CoA to the synthesis of either ATP or GTP and thus represents the only step of substrate-level phosphorylation in the TCA. The beta subunit provides nucleotide specificity of the enzyme and binds the substrate succinate, while the binding sites for coenzyme A and phosphate are found in the alpha subunit. This chain is Succinate--CoA ligase [ADP-forming] subunit beta, found in Hydrogenobaculum sp. (strain Y04AAS1).